A 283-amino-acid polypeptide reads, in one-letter code: Mitochondrial outer membrane protein porin (283 aa).

This sequence belongs to the eukaryotic mitochondrial porin family.

Its subcellular location is the mitochondrion outer membrane. Functionally, forms a channel through the cell membrane that allows diffusion of small hydrophilic molecules. The channel adopts an open conformation at low or zero membrane potential and a closed conformation at potentials above 30-40 mV. The open state has a weak anion selectivity whereas the closed state is cation-selective. In Neurospora crassa (strain ATCC 24698 / 74-OR23-1A / CBS 708.71 / DSM 1257 / FGSC 987), this protein is Mitochondrial outer membrane protein porin.